The primary structure comprises 357 residues: Trans-enoyl reductase buaC (357 aa).

Residue 50 to 53 coordinates NADP(+); that stretch reads VDTK. 135 to 142 provides a ligand contact to substrate; the sequence is TALVSACM. Residues 170–173, 193–196, Tyr211, and 258–259 contribute to the NADP(+) site; these read STAT, SPKN, and LN. Residue 278-282 participates in substrate binding; the sequence is ATLIT. Residue 347–348 coordinates NADP(+); the sequence is IS.

Belongs to the zinc-containing alcohol dehydrogenase family. In terms of assembly, monomer.

Its pathway is mycotoxin biosynthesis. Trans-enoyl reductase; part of the gene cluster that mediates the biosynthesis of burnettramic acids, an unusual class of bolaamphiphilic pyrrolizidinediones that display potent antibacterial, antifungal, and cytotoxic activities. The first step of the biosynthesis of burnettramic acids is the hydroxylation of proline by the proline hydroxylase buaE to generate 4-hydroxyproline. The PKS-NRPS buaA and trans-enoyl reductase buaC construct the highly reduced polyketide chain, and the condensation (C) domain of buaA then catalyzes the amide bond formation with the activated 4-hydroxyproline. This is followed by the R domain releasing the nascent polyketide-peptide directly via a Dieckmann condensation to afford a tetramic acid fused to the hydroxyproline, generating the bicyclic pyrrolidinedione moiety. The cytochrome P450 monooxygenases buaD and buaG are likely responsible for the multiple hydroxylations on the polyketide chain and its terminus, although in the heterologous context, buaD does not appear to be required. Therefore, while buaG may be a multifunctional cytochrome P450 monooxygenase, it cannot be ruled out that the two secondary alcohols on the polyketide chain could have an acetate origin. Finally, the glycosyltransferase buaB transfers beta-D-mannose to the aglycone burnettramic acid A to form burnettramic acid A. Burnettramic acid B is a minor cis-pyrrolizidine epimer of burnettramic acid A and it is likely that small amounts of it form naturally in acidic environments. This is Trans-enoyl reductase buaC from Petromyces alliaceus (Aspergillus alliaceus).